The primary structure comprises 164 residues: UPF0304 protein YPDSF_1971 (164 aa).

The protein belongs to the UPF0304 family.

The chain is UPF0304 protein YPDSF_1971 from Yersinia pestis (strain Pestoides F).